A 319-amino-acid polypeptide reads, in one-letter code: Acetaldehyde dehydrogenase 1 (319 aa).

The active-site Acyl-thioester intermediate is Cys-129. NAD(+) contacts are provided by residues 160–168 and Asn-287; that span reads SAGPGTRAN.

It belongs to the acetaldehyde dehydrogenase family.

The catalysed reaction is acetaldehyde + NAD(+) + CoA = acetyl-CoA + NADH + H(+). The polypeptide is Acetaldehyde dehydrogenase 1 (Burkholderia lata (strain ATCC 17760 / DSM 23089 / LMG 22485 / NCIMB 9086 / R18194 / 383)).